Here is a 139-residue protein sequence, read N- to C-terminus: Small ribosomal subunit protein eS6 (139 aa).

It belongs to the eukaryotic ribosomal protein eS6 family.

This Methanosarcina barkeri (strain Fusaro / DSM 804) protein is Small ribosomal subunit protein eS6.